Reading from the N-terminus, the 199-residue chain is Chaperone protein TorD (199 aa).

This sequence belongs to the TorD/DmsD family. TorD subfamily.

It localises to the cytoplasm. In terms of biological role, involved in the biogenesis of TorA. Acts on TorA before the insertion of the molybdenum cofactor and, as a result, probably favors a conformation of the apoenzyme that is competent for acquiring the cofactor. This is Chaperone protein TorD from Escherichia coli O81 (strain ED1a).